The sequence spans 1217 residues: ATP-dependent helicase/nuclease subunit A (1217 aa).

The region spanning 10–475 is the UvrD-like helicase ATP-binding domain; that stretch reads VIWTDAQWQS…IDLSQNFRSR (466 aa). 31 to 38 is a binding site for ATP; sequence AAAGSGKT. The UvrD-like helicase C-terminal domain occupies 476 to 786; it reads KEVLSTTNYI…RMMTIHSSKG (311 aa).

Belongs to the helicase family. AddA subfamily. In terms of assembly, heterodimer of AddA and AddB/RexB. Mg(2+) is required as a cofactor.

It catalyses the reaction Couples ATP hydrolysis with the unwinding of duplex DNA by translocating in the 3'-5' direction.. The enzyme catalyses ATP + H2O = ADP + phosphate + H(+). Its function is as follows. The heterodimer acts as both an ATP-dependent DNA helicase and an ATP-dependent, dual-direction single-stranded exonuclease. Recognizes the chi site generating a DNA molecule suitable for the initiation of homologous recombination. The AddA nuclease domain is required for chi fragment generation; this subunit has the helicase and 3' -&gt; 5' nuclease activities. The polypeptide is ATP-dependent helicase/nuclease subunit A (Staphylococcus aureus (strain NCTC 8325 / PS 47)).